A 462-amino-acid chain; its full sequence is Phosphoglucosamine mutase (462 aa).

Ser-111 functions as the Phosphoserine intermediate in the catalytic mechanism. Residues Ser-111, Asp-250, Asp-252, and Asp-254 each contribute to the Mg(2+) site. At Ser-111 the chain carries Phosphoserine.

The protein belongs to the phosphohexose mutase family. The cofactor is Mg(2+). Post-translationally, activated by phosphorylation.

The enzyme catalyses alpha-D-glucosamine 1-phosphate = D-glucosamine 6-phosphate. In terms of biological role, catalyzes the conversion of glucosamine-6-phosphate to glucosamine-1-phosphate. This is Phosphoglucosamine mutase from Synechococcus sp. (strain WH7803).